A 389-amino-acid chain; its full sequence is Cell wall mannoprotein HSP150 (389 aa).

The signal sequence occupies residues 1-18 (MQYKKTLVASALAATTLA). Positions 19-72 (AYAPSEPWSTLTPTATYSGGVTDYASTFGIAVQPISTTSSASSAATTASSKAKR) are excised as a propeptide. PIR1/2/3 repeat units follow at residues 71 to 89 (KRAA…TTTA), 97 to 115 (AAAV…TKTT), 116 to 134 (AAAV…TKTT), 140 to 158 (AAAV…TTTL), 164 to 182 (AAAV…TKTT), 183 to 201 (AAAV…TKTT), 202 to 220 (AAAV…TKTT), 221 to 239 (AAAV…TKTT), 240 to 257 (AAAV…TTKT), and 258 to 276 (TQAA…TATS).

This sequence belongs to the PIR protein family. In terms of processing, covalently linked to beta-1,3-glucan of the inner cell wall layer via an alkali-sensitive ester linkage between the gamma-carboxyl group of glutamic acids, arising from specific glutamines within the PIR1/2/3 repeats, and hydroxyl groups of glucoses of beta-1,3-glucan chains. The propeptide is cleaved off in the late Golgi. While both peptides are secreted, only a fraction of the mature glycoprotein is incorporated into the cell wall. Post-translationally, O-glycosylated. Extensively O-mannosylated.

The protein resides in the secreted. Its subcellular location is the cell wall. Its function is as follows. Component of the outer cell wall layer. Required for stability of the cell wall and for optimal growth. Required for resistance against several antifungal and cell wall-perturbing agents and for tolerance to heat shock. This Saccharomyces cerevisiae (strain YJM789) (Baker's yeast) protein is Cell wall mannoprotein HSP150 (HSP150).